The primary structure comprises 517 residues: Methionine aminopeptidase 1b (517 aa).

The interval 74-94 (YCNKENSNNNNNNNNNNNNNL) is disordered. Residues 79-94 (NSNNNNNNNNNNNNNL) show a composition bias toward low complexity. A C6H2-type zinc finger spans residues 114 to 166 (ENLCSGCKKVLIKKLSCPICLKNKIFSYFCNQECFKGSWKEHQKIHENMNKEN). Positions 117, 120, 130, 133, 143, 147, 155, and 159 each coordinate Zn(2+). His325 serves as a coordination point for a protein. Zn(2+)-binding residues include Asp342, Asp353, and His419. Position 426 (His426) interacts with a protein. Zn(2+)-binding residues include Glu452 and Glu483.

This sequence belongs to the peptidase M24A family. Methionine aminopeptidase type 1 subfamily. As to quaternary structure, associates with the 60S ribosomal subunit of the 80S translational complex. Zn(2+) serves as cofactor. Co(2+) is required as a cofactor. It depends on Mn(2+) as a cofactor. Requires Fe(2+) as cofactor.

It is found in the cytoplasm. The catalysed reaction is Release of N-terminal amino acids, preferentially methionine, from peptides and arylamides.. With respect to regulation, inhibited by pyrimidine derivative XC11. Its function is as follows. Cotranslationally removes the N-terminal methionine from nascent proteins. The N-terminal methionine is often cleaved when the second residue in the primary sequence is small and uncharged (Met-Ala-, Cys, Gly, Pro, Ser, Thr, or Val). May play an important role in parasite growth during the blood asexual stage. In Plasmodium falciparum (isolate 3D7), this protein is Methionine aminopeptidase 1b.